The following is a 277-amino-acid chain: Undecaprenyl-diphosphatase (277 aa).

Transmembrane regions (helical) follow at residues 3 to 23 (IALLIKAAIMGVVEGLTEFLP), 44 to 64 (AKVFDIAIQTGAIFAVILVYW), 82 to 102 (QFALNVLVAFVPAVVLGLLFG), 109 to 129 (LFTPVVVASTFVIGGFIILWA), 188 to 208 (ATDFSFYLAIPTLIGAGVYSL), 218 to 238 (ADVPLFMVGLVFSFVSAWLCI), and 249 to 269 (SFIPFAWYRIAFGVVVLATAW).

The protein belongs to the UppP family.

It is found in the cell inner membrane. It carries out the reaction di-trans,octa-cis-undecaprenyl diphosphate + H2O = di-trans,octa-cis-undecaprenyl phosphate + phosphate + H(+). Its function is as follows. Catalyzes the dephosphorylation of undecaprenyl diphosphate (UPP). Confers resistance to bacitracin. The polypeptide is Undecaprenyl-diphosphatase (Polaromonas sp. (strain JS666 / ATCC BAA-500)).